A 630-amino-acid chain; its full sequence is Pentatricopeptide repeat-containing protein At1g62670, mitochondrial (630 aa).

The transit peptide at methionine 1 to arginine 22 directs the protein to the mitochondrion. 16 PPR repeats span residues threonine 44–proline 79, serine 80–histidine 114, asparagine 115–proline 149, asparagine 150–proline 184, asparagine 185–proline 219, aspartate 220–proline 254, glycine 255–proline 289, asparagine 290–proline 324, aspartate 325–proline 359, serine 360–proline 394, aspartate 395–glycine 429, asparagine 430–proline 464, asparagine 465–proline 499, threonine 500–proline 534, aspartate 535–proline 569, and asparagine 570–glycine 604.

It belongs to the PPR family. P subfamily.

It localises to the mitochondrion. The sequence is that of Pentatricopeptide repeat-containing protein At1g62670, mitochondrial from Arabidopsis thaliana (Mouse-ear cress).